We begin with the raw amino-acid sequence, 552 residues long: Metal transporter Nramp6.1 (552 aa).

A glycan (N-linked (GlcNAc...) asparagine) is linked at asparagine 11. 7 consecutive transmembrane segments (helical) span residues 55-75, 88-108, 133-155, 159-181, 189-209, 238-258, and 275-295; these read FLSY…PGNL, ELLW…SLAA, CLWL…GTAF, ILFN…LLLG, KLEL…FGEM, IALL…ALVL, and YFLI…LAVI. The N-linked (GlcNAc...) asparagine glycan is linked to asparagine 306. Transmembrane regions (helical) follow at residues 338–358, 377–397, 402–422, 438–458, and 478–498; these read IYAI…TYAG, LVTR…GGSS, LIII…IPLL, IYII…NIYY, and VFIG…VIYL. The tract at residues 511 to 552 is disordered; sequence PNKNDPQQQTNMENGLAKSTEGPEMVDRAPYREDLADIPLPE. Positions 514-523 are enriched in polar residues; it reads NDPQQQTNME. Residues 535–545 are compositionally biased toward basic and acidic residues; it reads MVDRAPYREDL.

This sequence belongs to the NRAMP (TC 2.A.55) family.

Its subcellular location is the membrane. Probable divalent metal transporter. This is Metal transporter Nramp6.1 from Populus trichocarpa (Western balsam poplar).